The chain runs to 225 residues: ATP-dependent Clp protease proteolytic subunit (225 aa).

The active-site Nucleophile is the Ser123. Residue His148 is part of the active site.

This sequence belongs to the peptidase S14 family. Fourteen ClpP subunits assemble into 2 heptameric rings which stack back to back to give a disk-like structure with a central cavity, resembling the structure of eukaryotic proteasomes.

Its subcellular location is the cytoplasm. The enzyme catalyses Hydrolysis of proteins to small peptides in the presence of ATP and magnesium. alpha-casein is the usual test substrate. In the absence of ATP, only oligopeptides shorter than five residues are hydrolyzed (such as succinyl-Leu-Tyr-|-NHMec, and Leu-Tyr-Leu-|-Tyr-Trp, in which cleavage of the -Tyr-|-Leu- and -Tyr-|-Trp bonds also occurs).. Its function is as follows. Cleaves peptides in various proteins in a process that requires ATP hydrolysis. Has a chymotrypsin-like activity. Plays a major role in the degradation of misfolded proteins. This is ATP-dependent Clp protease proteolytic subunit from Chlorobium chlorochromatii (strain CaD3).